A 354-amino-acid polypeptide reads, in one-letter code: UPF0324 membrane protein BL1094 (354 aa).

A run of 10 helical transmembrane segments spans residues 12 to 33, 43 to 65, 86 to 108, 112 to 129, 138 to 160, 175 to 197, 239 to 256, 271 to 293, 300 to 321, and 331 to 353; these read IATVDMLFIGVLTLLASLFASW, FGALIIALLIGMIIQFPIRSAYV, LLRLGIILLGFKLNLAVLFTQGI, PIAAVVVTLTIIVCYAIA, LAILTAGGTGICGAAAVMGLAGS, VTMAVAIVAIMGTVFALLEIALG, LSRVLMLVFAAIIIAIWW, VAFPWFMLGFIGASIIGTFVPFV, LVDFAYIVLGMAMAALGINVNF, and PMLASFLTSILLMCFAAGVAMLF.

Belongs to the UPF0324 family.

It is found in the cell membrane. The protein is UPF0324 membrane protein BL1094 of Bifidobacterium longum (strain NCC 2705).